The sequence spans 150 residues: Globin-3 (150 aa).

Residues 11–150 (PLTAADKTKI…IICILLNSAY (140 aa)) form the Globin domain. Heme b is bound by residues His74 and His106.

It belongs to the globin family. In terms of assembly, monomer.

This Mordacia mordax (Southern hemisphere lamprey) protein is Globin-3.